A 495-amino-acid chain; its full sequence is Phosphomethylpyrimidine synthase (495 aa).

Substrate is bound by residues asparagine 125, methionine 154, tyrosine 183, histidine 219, 239–241 (SRG), 280–283 (DGLR), and glutamate 319. Histidine 323 provides a ligand contact to Zn(2+). Residue tyrosine 346 participates in substrate binding. Histidine 387 serves as a coordination point for Zn(2+). [4Fe-4S] cluster is bound by residues cysteine 467, cysteine 470, and cysteine 475.

Belongs to the ThiC family. It depends on [4Fe-4S] cluster as a cofactor.

It catalyses the reaction 5-amino-1-(5-phospho-beta-D-ribosyl)imidazole + S-adenosyl-L-methionine = 4-amino-2-methyl-5-(phosphooxymethyl)pyrimidine + CO + 5'-deoxyadenosine + formate + L-methionine + 3 H(+). The protein operates within cofactor biosynthesis; thiamine diphosphate biosynthesis. Catalyzes the synthesis of the hydroxymethylpyrimidine phosphate (HMP-P) moiety of thiamine from aminoimidazole ribotide (AIR) in a radical S-adenosyl-L-methionine (SAM)-dependent reaction. This is Phosphomethylpyrimidine synthase from Leptospira interrogans serogroup Icterohaemorrhagiae serovar Lai (strain 56601).